Consider the following 158-residue polypeptide: Low molecular weight phosphotyrosine protein phosphatase (158 aa).

Ala2 is subject to N-acetylalanine. The Nucleophile role is filled by Cys13. Residue Arg19 is part of the active site. Asp130 (proton donor) is an active-site residue. Phosphotyrosine occurs at positions 132 and 133.

This sequence belongs to the low molecular weight phosphotyrosine protein phosphatase family. As to quaternary structure, interacts with EPHA2; dephosphorylates EPHA2. Interacts with EPHB1. In terms of assembly, interacts with the SH3 domain of SPTAN1. There is no interaction observed for isoforms 2 or 3. Post-translationally, phosphorylated by LCK. Phosphorylation at Tyr-132 increases its phosphatase activity. In terms of processing, not phosphorylated. As to expression, expressed in T-lymphocytes.

The protein localises to the cytoplasm. It catalyses the reaction O-phospho-L-tyrosyl-[protein] + H2O = L-tyrosyl-[protein] + phosphate. It carries out the reaction a phosphate monoester + H2O = an alcohol + phosphate. Its activity is regulated as follows. Inhibited by sulfhydryl reagents. Functionally, acts on tyrosine phosphorylated proteins, low-MW aryl phosphates and natural and synthetic acyl phosphates with differences in substrate specificity between isoform 1 and isoform 2. Does not possess phosphatase activity. The polypeptide is Low molecular weight phosphotyrosine protein phosphatase (Homo sapiens (Human)).